A 172-amino-acid chain; its full sequence is Adenine phosphoribosyltransferase (172 aa).

This sequence belongs to the purine/pyrimidine phosphoribosyltransferase family. As to quaternary structure, homodimer.

It is found in the cytoplasm. The catalysed reaction is AMP + diphosphate = 5-phospho-alpha-D-ribose 1-diphosphate + adenine. It functions in the pathway purine metabolism; AMP biosynthesis via salvage pathway; AMP from adenine: step 1/1. Functionally, catalyzes a salvage reaction resulting in the formation of AMP, that is energically less costly than de novo synthesis. The chain is Adenine phosphoribosyltransferase from Roseiflexus sp. (strain RS-1).